The primary structure comprises 158 residues: Large ribosomal subunit protein uL15 (158 aa).

Positions 1–13 (MKLNEIKDNEGST) are enriched in basic and acidic residues. The disordered stretch occupies residues 1–45 (MKLNEIKDNEGSTHSRKRLGRGIGSGSGKTGGRGVKGQKSRSGVA). Over residues 21 to 35 (RGIGSGSGKTGGRGV) the composition is skewed to gly residues.

This sequence belongs to the universal ribosomal protein uL15 family. In terms of assembly, part of the 50S ribosomal subunit.

Binds to the 23S rRNA. The sequence is that of Large ribosomal subunit protein uL15 from Rhizobium johnstonii (strain DSM 114642 / LMG 32736 / 3841) (Rhizobium leguminosarum bv. viciae).